The chain runs to 134 residues: MSRMYETIYIVQPDLGDEEIKALSTKVQDVVAGMNGDFKRLEDWGTRKLAYPINKNPRGRYFYLRFDGDSGLIAELERRLRLDDKVIRYQSVKLETEVVAPAAAPVKSAEEGTEEVAAEAATEAPAETTTTVEV.

The segment at 103 to 134 (AAPVKSAEEGTEEVAAEAATEAPAETTTTVEV) is disordered. Over residues 118-134 (AEAATEAPAETTTTVEV) the composition is skewed to low complexity.

It belongs to the bacterial ribosomal protein bS6 family.

In terms of biological role, binds together with bS18 to 16S ribosomal RNA. The chain is Small ribosomal subunit protein bS6 from Geobacter sp. (strain M21).